Reading from the N-terminus, the 339-residue chain is DNA-directed RNA polymerase subunit alpha (339 aa).

Positions methionine 1–glutamate 233 are alpha N-terminal domain (alpha-NTD). The alpha C-terminal domain (alpha-CTD) stretch occupies residues glycine 266–phenylalanine 339.

This sequence belongs to the RNA polymerase alpha chain family. In plastids the minimal PEP RNA polymerase catalytic core is composed of four subunits: alpha, beta, beta', and beta''. When a (nuclear-encoded) sigma factor is associated with the core the holoenzyme is formed, which can initiate transcription.

Its subcellular location is the plastid. The protein resides in the chloroplast. The enzyme catalyses RNA(n) + a ribonucleoside 5'-triphosphate = RNA(n+1) + diphosphate. DNA-dependent RNA polymerase catalyzes the transcription of DNA into RNA using the four ribonucleoside triphosphates as substrates. The protein is DNA-directed RNA polymerase subunit alpha of Aegilops speltoides (Goatgrass).